The primary structure comprises 56 residues: Ovomucoid (56 aa).

The region spanning 6 to 56 (VDCSDHPKPACLQEQKPLCGSDNKTYDNKCSFCNAVVDSNGTLTLSHFGKC) is the Kazal-like domain. Intrachain disulfides connect Cys8-Cys38, Cys16-Cys35, and Cys24-Cys56. The N-linked (GlcNAc...) asparagine glycan is linked to Asn45.

It localises to the secreted. This chain is Ovomucoid, found in Pipile pipile (Trinidad piping guan).